Here is a 193-residue protein sequence, read N- to C-terminus: Rho-related protein racF2 (193 aa).

Residue 10-17 (GDGAVGKT) participates in GTP binding. The short motif at 32–40 (YLPTVFDNY) is the Effector region element. GTP-binding positions include 57-61 (DTAGQ) and 115-118 (TKQD). The residue at position 190 (Cys190) is a Cysteine methyl ester. The S-geranylgeranyl cysteine moiety is linked to residue Cys190. The propeptide at 191 to 193 (TIM) is removed in mature form.

Belongs to the small GTPase superfamily. Rho family.

Its subcellular location is the cell membrane. The polypeptide is Rho-related protein racF2 (racF2) (Dictyostelium discoideum (Social amoeba)).